We begin with the raw amino-acid sequence, 158 residues long: Anti-tumor lectin (158 aa).

Position 1 is a blocked amino end (Gln) (Q1). In terms of domain architecture, Galectin spans 12–155 (TSVDLAAPVT…STVVEAVTYT (144 aa)). Positions 43, 59, 63, 72, 74, 80, and 83 each coordinate N-acetyl-alpha-neuraminyl-(2-&gt;3)-beta-D-galactosyl-(1-&gt;4)-beta-D-glucose.

As to quaternary structure, homodimer. In terms of tissue distribution, detected in the fruiting body.

Functionally, anti-tumor lectin with DNase activity. Inhibits the growth of several tumor cell lines in vitro. Induces lymphocyte infiltration and necrosis of tumor cells in a mouse tumor model. Induces apoptosis in HeLa cells. Binds N-acetylneuraminyl lactose (N-acetyl-alpha-neuraminyl-(2-&gt;3)-beta-D-galactosyl-(1-&gt;4)-beta-D-glucose). In Cyclocybe aegerita (Black poplar mushroom), this protein is Anti-tumor lectin.